Here is a 1434-residue protein sequence, read N- to C-terminus: Nitric oxide synthase 1 (1434 aa).

An interaction with NOSIP region spans residues 1-205 (MEDHMFGVQQ…LQGRGENNEL (205 aa)). The PDZ domain maps to 17 to 99 (SVRLFKRKVG…ETHVVLILRG (83 aa)). Disordered stretches follow at residues 112 to 192 (TGDG…KKAT) and 276 to 302 (NNPY…PSKC). Residues 163–245 (YDDGQEAGSL…MGIQVDRDLD (83 aa)) form an interaction with DYNLL1/PIN region. Positions 285–299 (PPTSGKQSPTKNGSP) are enriched in polar residues. A (6R)-L-erythro-5,6,7,8-tetrahydrobiopterin-binding site is contributed by Ser-339. Cys-420 provides a ligand contact to heme b. L-arginine contacts are provided by Gln-483, Trp-592, Tyr-593, and Glu-597. Positions 682, 683, and 696 each coordinate (6R)-L-erythro-5,6,7,8-tetrahydrobiopterin. Tyr-711 contributes to the heme b binding site. Positions 730–750 (KRRAIGFKKLAEAVKFSAKLM) are calmodulin-binding. The region spanning 760-940 (ATILYATETG…AFRTWAKKVF (181 aa)) is the Flavodoxin-like domain. Residues Thr-766, Glu-767, Thr-768, Lys-770, Ser-771, Ser-812, Thr-813, and Gly-817 each contribute to the FMN site. 3 positions are modified to phosphoserine: Ser-852, Ser-862, and Ser-863. Residues Ser-891, His-896, Cys-898, Glu-924, and Gln-928 each contribute to the FMN site. The region spanning 995-1242 (KRVSAARLLS…VRGAPSFHLP (248 aa)) is the FAD-binding FR-type domain. Position 1015 (Arg-1015) interacts with NADP(+). FAD contacts are provided by His-1037, Arg-1178, Tyr-1179, Tyr-1180, Ser-1181, Thr-1196, and Ala-1198. Ser-1201 contacts NADP(+). The FAD site is built by Tyr-1202, Val-1215, Cys-1216, and Ser-1217. Thr-1256, Arg-1289, Ser-1318, Arg-1319, Lys-1325, Tyr-1327, Gln-1329, Asp-1362, Thr-1403, and Arg-1405 together coordinate NADP(+).

Belongs to the NOS family. As to quaternary structure, homodimer. Interacts with DLG4; the interaction possibly being prevented by the association between NOS1 and CAPON. Forms a ternary complex with CAPON and RASD1. Forms a ternary complex with CAPON and SYN1. Interacts with ZDHHC23. Interacts with NOSIP; which may impair its synaptic location. Interacts with HTR4. Interacts with SLC6A4. Interacts with VAC14. Interacts (via N-terminal domain) with DLG4 (via N-terminal tandem pair of PDZ domains). Interacts with SLC6A4. Forms a complex with ASL, ASS1 and SLC7A1; the complex regulates cell-autonomous L-arginine synthesis and citrulline recycling while channeling extracellular L-arginine to nitric oxide synthesis pathway. Interacts with DMD; localizes NOS1 to sarcolemma in muscle cells. Interacts with DYNLL1; inhibits the nitric oxide synthase activity. The cofactor is heme b. FAD serves as cofactor. It depends on FMN as a cofactor. (6R)-L-erythro-5,6,7,8-tetrahydrobiopterin is required as a cofactor. In terms of processing, ubiquitinated; mediated by STUB1/CHIP in the presence of Hsp70 and Hsp40 (in vitro). Isoform 1 is ubiquitously expressed: detected in skeletal muscle and brain, also in testis, lung and kidney, and at low levels in heart, adrenal gland and retina. Not detected in the platelets. Isoform 3 is expressed only in testis. Isoform 4 is detected in testis, skeletal muscle, lung, and kidney, at low levels in the brain, but not in the heart and adrenal gland.

The protein localises to the cell membrane. It localises to the sarcolemma. The protein resides in the cell projection. It is found in the dendritic spine. The enzyme catalyses 2 L-arginine + 3 NADPH + 4 O2 + H(+) = 2 L-citrulline + 2 nitric oxide + 3 NADP(+) + 4 H2O. Its activity is regulated as follows. Stimulated by calcium/calmodulin. Inhibited by DYNLL1 that prevents the dimerization of the protein. Inhibited by NOSIP. In terms of biological role, produces nitric oxide (NO) which is a messenger molecule with diverse functions throughout the body. In the brain and peripheral nervous system, NO displays many properties of a neurotransmitter. Probably has nitrosylase activity and mediates cysteine S-nitrosylation of cytoplasmic target proteins such SRR. In Homo sapiens (Human), this protein is Nitric oxide synthase 1.